The sequence spans 618 residues: 1-deoxy-D-xylulose-5-phosphate synthase (618 aa).

Thiamine diphosphate contacts are provided by residues histidine 74 and 115 to 117 (GHS). Mg(2+) is bound at residue aspartate 146. Thiamine diphosphate contacts are provided by residues 147–148 (GA), asparagine 175, tyrosine 286, and glutamate 366. Asparagine 175 contributes to the Mg(2+) binding site.

Belongs to the transketolase family. DXPS subfamily. Homodimer. The cofactor is Mg(2+). Thiamine diphosphate is required as a cofactor.

It carries out the reaction D-glyceraldehyde 3-phosphate + pyruvate + H(+) = 1-deoxy-D-xylulose 5-phosphate + CO2. It participates in metabolic intermediate biosynthesis; 1-deoxy-D-xylulose 5-phosphate biosynthesis; 1-deoxy-D-xylulose 5-phosphate from D-glyceraldehyde 3-phosphate and pyruvate: step 1/1. In terms of biological role, catalyzes the acyloin condensation reaction between C atoms 2 and 3 of pyruvate and glyceraldehyde 3-phosphate to yield 1-deoxy-D-xylulose-5-phosphate (DXP). This chain is 1-deoxy-D-xylulose-5-phosphate synthase, found in Clostridium tetani (strain Massachusetts / E88).